The sequence spans 505 residues: Lysine--tRNA ligase (505 aa).

The Mg(2+) site is built by Glu-415 and Glu-422.

The protein belongs to the class-II aminoacyl-tRNA synthetase family. In terms of assembly, homodimer. Mg(2+) serves as cofactor.

The protein localises to the cytoplasm. The enzyme catalyses tRNA(Lys) + L-lysine + ATP = L-lysyl-tRNA(Lys) + AMP + diphosphate. The sequence is that of Lysine--tRNA ligase from Salmonella arizonae (strain ATCC BAA-731 / CDC346-86 / RSK2980).